Consider the following 189-residue polypeptide: uncharacterized protein (189 aa).

Belongs to the mimivirus R457/R459 family.

The protein localises to the virion. This is an uncharacterized protein from Acanthamoeba polyphaga mimivirus (APMV).